The following is a 208-amino-acid chain: Rac-like GTP-binding protein ARAC8 (208 aa).

A GTP-binding site is contributed by 15 to 22 (GDGAVGKT). Residues 37–45 (YIPTVFDNF) carry the Effector region motif. GTP is bound by residues 62-66 (DTAGQ) and 120-123 (TKMD). 2 S-palmitoyl cysteine lipidation sites follow: Cys199 and Cys205.

This sequence belongs to the small GTPase superfamily. Rho family. In terms of assembly, interacts with ICR1. Binds to SPK1. Although this sequence has a C-terminal -CXXX, it is palmitoylated at Cys-205, rather than prenylated.

The protein localises to the membrane. In terms of biological role, acts as a negative regulator of abscisic acid (ABA) responses. This is Rac-like GTP-binding protein ARAC8 (ARAC8) from Arabidopsis thaliana (Mouse-ear cress).